Consider the following 513-residue polypeptide: MQLNSTEISELIKKRIAQFDVVSEARNTGTIVSVSDGIIRIHGLSDVMQGEMIALPGNRYAMALNLERDSVGAVVMGPYADLAEGMEVQCTGRILEVPVGSGLLGRVVNTLGQPIDGKGEIENDDFSPVEVIAPGVIDRRSVDQPVQTGYKAVDSMVPIGRGQRELIIGDRQTGKTALAIDAIINQRNSGIKCIYVAIGQKASTIANVVRKLEEHGALANTIVVAASASESAALQYLAPYAGCAMGEYFRDRGEDALIVYDDLSKQAVAYRQISLLLRRPPGREAYPGDVFYLHSRLLERASRVNEDYVEKFTKGEVKGKTGSLTALPIIETQAGDVSAFVPTNVISITDGQIFLESNLFNSGIRPAVNPGISVSRVGGSAQTKVIKKLAGGIRTALAQYRELAAFAQFASDLDDATRKQLSHGEKVTELLKQKQFAPLSVAEQAVILFAVEFGYLDDVELSKIASFETALLDYSNRNHAEFMQELNKTGNYNDEIKDTLKSILDGFKANSAW.

169-176 (GDRQTGKT) is a binding site for ATP.

This sequence belongs to the ATPase alpha/beta chains family. As to quaternary structure, F-type ATPases have 2 components, CF(1) - the catalytic core - and CF(0) - the membrane proton channel. CF(1) has five subunits: alpha(3), beta(3), gamma(1), delta(1), epsilon(1). CF(0) has three main subunits: a(1), b(2) and c(9-12). The alpha and beta chains form an alternating ring which encloses part of the gamma chain. CF(1) is attached to CF(0) by a central stalk formed by the gamma and epsilon chains, while a peripheral stalk is formed by the delta and b chains.

The protein localises to the cell inner membrane. The enzyme catalyses ATP + H2O + 4 H(+)(in) = ADP + phosphate + 5 H(+)(out). Functionally, produces ATP from ADP in the presence of a proton gradient across the membrane. The alpha chain is a regulatory subunit. The sequence is that of ATP synthase subunit alpha from Haemophilus influenzae (strain 86-028NP).